Here is a 430-residue protein sequence, read N- to C-terminus: Serine--tRNA ligase (430 aa).

An L-serine-binding site is contributed by 237 to 239 (TAE). Position 268–270 (268–270 (RSE)) interacts with ATP. Glu291 provides a ligand contact to L-serine. 355–358 (EISS) is an ATP binding site. Ser391 is a binding site for L-serine.

It belongs to the class-II aminoacyl-tRNA synthetase family. Type-1 seryl-tRNA synthetase subfamily. As to quaternary structure, homodimer. The tRNA molecule binds across the dimer.

It is found in the cytoplasm. The catalysed reaction is tRNA(Ser) + L-serine + ATP = L-seryl-tRNA(Ser) + AMP + diphosphate + H(+). It carries out the reaction tRNA(Sec) + L-serine + ATP = L-seryl-tRNA(Sec) + AMP + diphosphate + H(+). It participates in aminoacyl-tRNA biosynthesis; selenocysteinyl-tRNA(Sec) biosynthesis; L-seryl-tRNA(Sec) from L-serine and tRNA(Sec): step 1/1. Its function is as follows. Catalyzes the attachment of serine to tRNA(Ser). Is also able to aminoacylate tRNA(Sec) with serine, to form the misacylated tRNA L-seryl-tRNA(Sec), which will be further converted into selenocysteinyl-tRNA(Sec). This Yersinia enterocolitica serotype O:8 / biotype 1B (strain NCTC 13174 / 8081) protein is Serine--tRNA ligase.